The chain runs to 236 residues: Phosphoribosylaminoimidazole-succinocarboxamide synthase (236 aa).

This sequence belongs to the SAICAR synthetase family.

The catalysed reaction is 5-amino-1-(5-phospho-D-ribosyl)imidazole-4-carboxylate + L-aspartate + ATP = (2S)-2-[5-amino-1-(5-phospho-beta-D-ribosyl)imidazole-4-carboxamido]succinate + ADP + phosphate + 2 H(+). It participates in purine metabolism; IMP biosynthesis via de novo pathway; 5-amino-1-(5-phospho-D-ribosyl)imidazole-4-carboxamide from 5-amino-1-(5-phospho-D-ribosyl)imidazole-4-carboxylate: step 1/2. This chain is Phosphoribosylaminoimidazole-succinocarboxamide synthase, found in Hahella chejuensis (strain KCTC 2396).